Reading from the N-terminus, the 276-residue chain is Bis(5'-nucleosyl)-tetraphosphatase, symmetrical (276 aa).

It belongs to the Ap4A hydrolase family.

The catalysed reaction is P(1),P(4)-bis(5'-adenosyl) tetraphosphate + H2O = 2 ADP + 2 H(+). Hydrolyzes diadenosine 5',5'''-P1,P4-tetraphosphate to yield ADP. This Legionella pneumophila (strain Lens) protein is Bis(5'-nucleosyl)-tetraphosphatase, symmetrical.